Reading from the N-terminus, the 217-residue chain is Putative oxidative stress regulator AosR (217 aa).

The CXXXC motif lies at cysteine 5 to cysteine 9. Cysteine 5 and cysteine 9 form a disulfide bridge.

It belongs to the AosR family.

In Mycobacterium leprae (strain TN), this protein is Putative oxidative stress regulator AosR.